Reading from the N-terminus, the 248-residue chain is Phosphomannomutase (248 aa).

Residue aspartate 14 is the Nucleophile of the active site. Residues aspartate 14 and aspartate 16 each contribute to the Mg(2+) site. The active-site Proton donor/acceptor is the aspartate 16. Residues arginine 23, arginine 125, arginine 136, arginine 143, serine 181, and aspartate 183 each coordinate alpha-D-mannose 1-phosphate. Residues aspartate 209, phenylalanine 221, and threonine 226 each contribute to the Mg(2+) site.

The protein belongs to the eukaryotic PMM family. As to quaternary structure, homodimer. Requires Mg(2+) as cofactor.

The protein localises to the cytoplasm. The enzyme catalyses alpha-D-mannose 1-phosphate = D-mannose 6-phosphate. It functions in the pathway nucleotide-sugar biosynthesis; GDP-alpha-D-mannose biosynthesis; alpha-D-mannose 1-phosphate from D-fructose 6-phosphate: step 2/2. In terms of biological role, catalyzes the interconversion of mannose-6-phosphate to mannose-1-phosphate, the precursor for the synthesis of GDP-mannose. GDP-mannose is an essential sugar nucleotide for the synthesis of D-mannose-containing cell wall polysaccharides (galactomannans and glucomannans), glycolipids, glycoproteins and the antioxidant L-ascorbate. The polypeptide is Phosphomannomutase (Oryza sativa subsp. indica (Rice)).